Reading from the N-terminus, the 216-residue chain is Adenylate kinase (216 aa).

10 to 15 serves as a coordination point for ATP; sequence GAGKGT. An NMP region spans residues 30-59; sequence STGDIFRAHMSQGTPLGKLAKEYVDAGKYV. Residues T31, R36, 57–59, 85–88, and Q92 contribute to the AMP site; these read KYV and GYPR. Residues 126-163 form an LID region; sequence GRRVCRSCGATYHVRFNPPREAGRCDRCGGELYQRSDD. An ATP-binding site is contributed by R127. 2 residues coordinate Zn(2+): C130 and C133. 136–137 contributes to the ATP binding site; sequence TY. Positions 150 and 153 each coordinate Zn(2+). 2 residues coordinate AMP: R160 and R171. Q199 is an ATP binding site.

Belongs to the adenylate kinase family. In terms of assembly, monomer.

It localises to the cytoplasm. The catalysed reaction is AMP + ATP = 2 ADP. It participates in purine metabolism; AMP biosynthesis via salvage pathway; AMP from ADP: step 1/1. Its function is as follows. Catalyzes the reversible transfer of the terminal phosphate group between ATP and AMP. Plays an important role in cellular energy homeostasis and in adenine nucleotide metabolism. The protein is Adenylate kinase of Symbiobacterium thermophilum (strain DSM 24528 / JCM 14929 / IAM 14863 / T).